We begin with the raw amino-acid sequence, 325 residues long: WUSCHEL-related homeobox 8 (325 aa).

The segment at residues 51–115 (DPKPRWNPKP…NRKSRAKHKL (65 aa)) is a DNA-binding region (homeobox; WUS-type).

The protein belongs to the WUS homeobox family. Expressed only in the egg cell. Not detected in the pollen tube. Expressed in the zygote, the basal cell, and later the suspensor. Expressed in all suspensor cells, except the hypophysis, and in the embryo surrounding region (ESR) endosperm cells. Strongly expressed in the suspensor cells, with a weak expression also detected throughout the developing embryo.

The protein localises to the nucleus. In terms of biological role, probable transcription factor, which may be involved in embryonic patterning. May be required for basal embryo development after fertilization. Acts partially redundantly with STIP in promoting embryonic cell division and proliferation. Promotes cotyledon boundary formation by maintaining the symmetry in CUC genes expression domains. The sequence is that of WUSCHEL-related homeobox 8 from Arabidopsis thaliana (Mouse-ear cress).